Reading from the N-terminus, the 400-residue chain is Elongation factor Tu (400 aa).

The tr-type G domain maps to 10 to 210 (KPHINVGTIG…ALDEYIPEPK (201 aa)). The tract at residues 19-26 (GHVDHGKT) is G1. 19 to 26 (GHVDHGKT) serves as a coordination point for GTP. A Mg(2+)-binding site is contributed by Thr-26. The tract at residues 64–68 (GITIA) is G2. A G3 region spans residues 85–88 (DCPG). GTP contacts are provided by residues 85–89 (DCPGH) and 140–143 (NKAD). Positions 140 to 143 (NKAD) are G4. Positions 178 to 180 (SAL) are G5.

Belongs to the TRAFAC class translation factor GTPase superfamily. Classic translation factor GTPase family. EF-Tu/EF-1A subfamily. In terms of assembly, monomer.

Its subcellular location is the cytoplasm. The catalysed reaction is GTP + H2O = GDP + phosphate + H(+). In terms of biological role, GTP hydrolase that promotes the GTP-dependent binding of aminoacyl-tRNA to the A-site of ribosomes during protein biosynthesis. This Rubrobacter xylanophilus (strain DSM 9941 / JCM 11954 / NBRC 16129 / PRD-1) protein is Elongation factor Tu.